A 146-amino-acid polypeptide reads, in one-letter code: D-aminoacyl-tRNA deacylase (146 aa).

Residues 137–138 (GP) carry the Gly-cisPro motif, important for rejection of L-amino acids motif.

This sequence belongs to the DTD family. Homodimer.

It localises to the cytoplasm. The catalysed reaction is glycyl-tRNA(Ala) + H2O = tRNA(Ala) + glycine + H(+). It catalyses the reaction a D-aminoacyl-tRNA + H2O = a tRNA + a D-alpha-amino acid + H(+). An aminoacyl-tRNA editing enzyme that deacylates mischarged D-aminoacyl-tRNAs. Also deacylates mischarged glycyl-tRNA(Ala), protecting cells against glycine mischarging by AlaRS. Acts via tRNA-based rather than protein-based catalysis; rejects L-amino acids rather than detecting D-amino acids in the active site. By recycling D-aminoacyl-tRNA to D-amino acids and free tRNA molecules, this enzyme counteracts the toxicity associated with the formation of D-aminoacyl-tRNA entities in vivo and helps enforce protein L-homochirality. The protein is D-aminoacyl-tRNA deacylase of Shouchella clausii (strain KSM-K16) (Alkalihalobacillus clausii).